We begin with the raw amino-acid sequence, 125 residues long: Cu-Zn superoxide dismutase-like protein (125 aa).

Cys-52 and Cys-102 are disulfide-bonded.

This sequence belongs to the Cu-Zn superoxide dismutase family.

It localises to the host cytoplasm. Virion protein with no enzymatic activity. This Mus musculus (Mouse) protein is Cu-Zn superoxide dismutase-like protein.